The primary structure comprises 1338 residues: Nonribosomal peptide synthetase astA (1338 aa).

The disordered stretch occupies residues 22–52 (IAVVSGDIPSPHPKNEPSQTSTLHIPRDSDL). The interval 271 to 681 (FQARCRQNPS…GRKGAEVKLR (411 aa)) is adenylation. One can recognise a Carrier domain in the interval 820-893 (TPVEIIIHDA…SLAEKCSAGG (74 aa)). O-(pantetheine 4'-phosphoryl)serine is present on Ser-854. Residues 949–1336 (TFIFRLSGPV…IIRFLDSPDS (388 aa)) form a condensation region.

The protein belongs to the NRP synthetase family.

It catalyses the reaction 7beta,14,16-trihydroxyconfertifolin + benzoate + H(+) = dideacetyl astellolide A + H2O. The catalysed reaction is 7beta,14,16-trihydroxyconfertifolin + 4-hydroxybenzoate + H(+) = dideacetyl astellolide B + H2O. Its pathway is secondary metabolite biosynthesis; terpenoid biosynthesis. Functionally, nonribosomal peptide synthetase; part of the gene cluster that mediates the biosynthesis of astellolides, drimane-type sesquiterpene esters that show antimicrobial, anti-inflammatory, and anti-tumor activities. The first step in astellolide biosynthesis is performed by the sesquiterpene cyclase astC that catalyzes the formation of drimanyl pyrophosphate from farnesyl pyrophosphate. Drimanyl pyrophosphate is then dephosphorylated by the sesquiterpene phosphatase astI to produce drimanyl monophosphate which is further dephosphorylated to drim-8-ene-11-ol by atsK. Drim-8-ene-11-ol is converted to confertifolin, probably by the cytochrome P450 monooxygenase astD and/or the dehydrogenase astE. The cytochrome P450 monooxygenases astB, astF and astJ then hydroxylate confertifolin at C6, C14, or C15 to form trihydroxy confertifolin. The nonribosomal peptide synthetase astA catalyzes ester bond formation between trihydroxy contifolin and benzoic acid (BA) or 4-hydroxy benzoic acid (4HBA), leading to the formation of dideacetyl astellolides A and B, respectively. Finally, the O-acetyltransferase astG converts dideacetyl astellolides A and B into deacetyl astellolides A and B. The sequence is that of Nonribosomal peptide synthetase astA from Aspergillus oryzae (strain ATCC 42149 / RIB 40) (Yellow koji mold).